The sequence spans 326 residues: Eukaryotic translation initiation factor 3 subunit I (326 aa).

WD repeat units follow at residues 8–47, 50–89, 145–184, 188–227, and 285–326; these read GHER…RLGT, GHQG…IIAS, MTES…KVVD, DHAA…CLKT, and GHFG…NIFE.

The protein belongs to the eIF-3 subunit I family. Component of the eukaryotic translation initiation factor 3 (eIF-3) complex. The eIF-3 complex interacts with pix.

Its subcellular location is the cytoplasm. Its function is as follows. Component of the eukaryotic translation initiation factor 3 (eIF-3) complex, which is involved in protein synthesis of a specialized repertoire of mRNAs and, together with other initiation factors, stimulates binding of mRNA and methionyl-tRNAi to the 40S ribosome. The eIF-3 complex specifically targets and initiates translation of a subset of mRNAs involved in cell proliferation. This Drosophila pseudoobscura pseudoobscura (Fruit fly) protein is Eukaryotic translation initiation factor 3 subunit I.